Here is a 477-residue protein sequence, read N- to C-terminus: RNA pseudouridine synthase 4, mitochondrial (477 aa).

The transit peptide at 1-43 (MAKWRLATATLRRQLQSSSPTISTFKNPTKALSAAAHQSTRSY) directs the protein to the mitochondrion. The tract at residues 34–55 (AAAHQSTRSYSTTQTDDSRGKW) is disordered. Residues 36–48 (AHQSTRSYSTTQT) are compositionally biased toward polar residues. In terms of domain architecture, S4 RNA-binding spans 90–175 (TTALRWILRC…AKKESFQCSD (86 aa)). Asp-236 is a catalytic residue.

The protein belongs to the pseudouridine synthase RluA family.

Its subcellular location is the mitochondrion. It carries out the reaction a uridine in RNA = a pseudouridine in RNA. The chain is RNA pseudouridine synthase 4, mitochondrial from Arabidopsis thaliana (Mouse-ear cress).